We begin with the raw amino-acid sequence, 61 residues long: uncharacterized protein (61 aa).

Residues 38–61 are disordered; the sequence is TPRPFTPGLADPRRLGPRRVQAAQ.

This is an uncharacterized protein from Homo sapiens (Human).